Here is a 336-residue protein sequence, read N- to C-terminus: MRILGIETSCDDTGIAIYDTNKGLLINEIYNQRKLNNIYGGIIPELASREHMEAMIVLLNKIFKKKNIYKYVDMIAYTAGPGLIGSLLVGATFACSLGLSLNIPVLPVHHMEAHLLSPMLDYKTIQFPFIGLLVSGKHTQIIGAHKFGEYEILGNCLDDAAGEAFDKTAKLLGLKYPGGLELSKLASKGIKDYFYFPRPMIHHSDLNFSFSGLKTFAAQTIKKSSKSMQEKANIAKAFEDAVIDILLIKTKKALKKQKWKRLVIAGGVSANQKLRKKSEIMVKKNFNGTVFYSSLEFCTDNAAMIAYLGSLRQKEARNSQLEILVKPKWSIDDLCF.

His110 and His114 together coordinate Fe cation. Substrate is bound by residues 133–137 (LVSGK), Asp166, Gly179, and Asn271. Asp300 is a Fe cation binding site.

The protein belongs to the KAE1 / TsaD family. Fe(2+) is required as a cofactor.

It localises to the cytoplasm. It catalyses the reaction L-threonylcarbamoyladenylate + adenosine(37) in tRNA = N(6)-L-threonylcarbamoyladenosine(37) in tRNA + AMP + H(+). Its function is as follows. Required for the formation of a threonylcarbamoyl group on adenosine at position 37 (t(6)A37) in tRNAs that read codons beginning with adenine. Is involved in the transfer of the threonylcarbamoyl moiety of threonylcarbamoyl-AMP (TC-AMP) to the N6 group of A37, together with TsaE and TsaB. TsaD likely plays a direct catalytic role in this reaction. This chain is tRNA N6-adenosine threonylcarbamoyltransferase, found in Buchnera aphidicola subsp. Acyrthosiphon pisum (strain 5A).